The chain runs to 209 residues: Uracil phosphoribosyltransferase (209 aa).

5-phospho-alpha-D-ribose 1-diphosphate is bound by residues Arg77, Arg102, and 129–137; that span reads DPMLATGSS. Residues Ile192 and 197-199 contribute to the uracil site; that span reads GDA. Asp198 lines the 5-phospho-alpha-D-ribose 1-diphosphate pocket.

The protein belongs to the UPRTase family. It depends on Mg(2+) as a cofactor.

The catalysed reaction is UMP + diphosphate = 5-phospho-alpha-D-ribose 1-diphosphate + uracil. It functions in the pathway pyrimidine metabolism; UMP biosynthesis via salvage pathway; UMP from uracil: step 1/1. Allosterically activated by GTP. Catalyzes the conversion of uracil and 5-phospho-alpha-D-ribose 1-diphosphate (PRPP) to UMP and diphosphate. The protein is Uracil phosphoribosyltransferase of Metamycoplasma hominis (Mycoplasma hominis).